The chain runs to 397 residues: Phosphoglycerate kinase (397 aa).

Substrate contacts are provided by residues D21–N23, R36, H59–R62, R119, and R152. ATP contacts are provided by residues K202, E324, and G354 to T357.

This sequence belongs to the phosphoglycerate kinase family. As to quaternary structure, monomer.

The protein resides in the cytoplasm. It catalyses the reaction (2R)-3-phosphoglycerate + ATP = (2R)-3-phospho-glyceroyl phosphate + ADP. The protein operates within carbohydrate degradation; glycolysis; pyruvate from D-glyceraldehyde 3-phosphate: step 2/5. The chain is Phosphoglycerate kinase from Cereibacter sphaeroides (strain ATCC 17029 / ATH 2.4.9) (Rhodobacter sphaeroides).